The following is a 478-amino-acid chain: Shikimate biosynthesis protein AroDE (478 aa).

The interval 1-208 (MLCTIIRGPS…LNHHYFYNFT (208 aa)) is 3-dehydroquinate dehydratase. Residues serine 21, 29–31 (EMR), and 55–57 (TWK) each bind 3-dehydroquinate. The active-site Proton donor/acceptor; for 3-dehydroquinate dehydratase activity is the histidine 110. The active-site Schiff-base intermediate with substrate; for 3-dehydroquinate dehydratase activity is the lysine 133. The 3-dehydroquinate site is built by arginine 171 and glutamine 196. The interval 209–478 (NLSPQSQICA…VLASLFSIAA (270 aa)) is shikimate 5-dehydrogenase. Shikimate is bound at residue 226–228 (SIG). Lysine 277 acts as the Proton acceptor; for shikimate dehydrogenase activity in catalysis. Asparagine 298 and aspartate 313 together coordinate shikimate. NADP(+)-binding positions include 337–341 (GAGGA), 360–362 (NRT), and glycine 435. Shikimate is bound at residue glutamine 442.

The protein in the N-terminal section; belongs to the type-I 3-dehydroquinase family. In the C-terminal section; belongs to the shikimate dehydrogenase family.

It carries out the reaction 3-dehydroquinate = 3-dehydroshikimate + H2O. The enzyme catalyses shikimate + NADP(+) = 3-dehydroshikimate + NADPH + H(+). Its pathway is metabolic intermediate biosynthesis; chorismate biosynthesis; chorismate from D-erythrose 4-phosphate and phosphoenolpyruvate: step 3/7. The protein operates within metabolic intermediate biosynthesis; chorismate biosynthesis; chorismate from D-erythrose 4-phosphate and phosphoenolpyruvate: step 4/7. Functionally, bifunctional enzyme that catalyzes two sequential steps of the aromatic amino acids biosynthetic pathway. In the first reaction, the AroD domain catalyzes the cis-dehydration of 3-dehydroquinate (DHQ) and introduces the first double bond of the aromatic ring to yield 3-dehydroshikimate; in the second reaction, the AroE domain catalyzes the reversible NADPH linked reduction of 3-dehydroshikimate (DHSA) to yield shikimate (SA). The sequence is that of Shikimate biosynthesis protein AroDE from Chlamydia muridarum (strain MoPn / Nigg).